The sequence spans 213 residues: Flagellar transcriptional regulator FlhC (213 aa).

4 residues coordinate Zn(2+): cysteine 138, cysteine 141, cysteine 158, and cysteine 161.

The protein belongs to the FlhC family. As to quaternary structure, heterohexamer composed of two FlhC and four FlhD subunits. Each FlhC binds a FlhD dimer, forming a heterotrimer, and a hexamer assembles by dimerization of two heterotrimers. Zn(2+) is required as a cofactor.

Its subcellular location is the cytoplasm. Functionally, functions in complex with FlhD as a master transcriptional regulator that regulates transcription of several flagellar and non-flagellar operons by binding to their promoter region. Activates expression of class 2 flagellar genes, including fliA, which is a flagellum-specific sigma factor that turns on the class 3 genes. Also regulates genes whose products function in a variety of physiological pathways. In Cupriavidus metallidurans (strain ATCC 43123 / DSM 2839 / NBRC 102507 / CH34) (Ralstonia metallidurans), this protein is Flagellar transcriptional regulator FlhC.